The chain runs to 514 residues: Putative GTP-binding protein 6 (514 aa).

Residues 48-71 form a disordered region; it reads WAGGGPVRGGGEEDPREDEEEEED. A compositionally biased stretch (acidic residues) spans 59-71; that stretch reads EEDPREDEEEEED. In terms of domain architecture, Hflx-type G spans 285 to 449; that stretch reads PVVSVVGYTN…ALEASVLRAT (165 aa). Residues Thr298 and Thr319 each coordinate Mg(2+).

The protein belongs to the TRAFAC class OBG-HflX-like GTPase superfamily. HflX GTPase family. Mg(2+) serves as cofactor.

The protein is Putative GTP-binding protein 6 (Gtpbp6) of Mus musculus (Mouse).